The sequence spans 618 residues: uncharacterized protein (618 aa).

The N-terminal stretch at 1 to 29 (MSFLVLPPEVNSALMFAGAGSGPTLAAAA) is a signal peptide. The disordered stretch occupies residues 598 to 618 (SGDNSSGGFNAGNDQSGFFDG).

The protein belongs to the mycobacterial PPE family.

This is an uncharacterized protein from Mycobacterium tuberculosis (strain ATCC 25618 / H37Rv).